The sequence spans 295 residues: Probable adenylate kinase 6, chloroplastic (295 aa).

A chloroplast-targeting transit peptide spans 1–46 (MAVSHRLLRPATTTIKNTFSSLFIRSLSSSSSGSSLDPKIDLEEAA). An ATP-binding site is contributed by 74-79 (GVGKGT). The NMP stretch occupies residues 94–123 (ATGDLVREELSSSGLLSSQLKELVNHGKLV). AMP is bound by residues Thr-95, Arg-100, 121–123 (KLV), 151–154 (GFPR), and Gln-158. Residues 187–235 (GRRICSECGGNYNVACIDIKGDDDTPRMYMPPLLPPPNCESKLISRADD) are LID. Arg-188 provides a ligand contact to ATP. Arg-243 serves as a coordination point for AMP. Gly-271 lines the ATP pocket.

This sequence belongs to the adenylate kinase family. In terms of assembly, monomer.

It localises to the plastid. It is found in the chloroplast. The enzyme catalyses AMP + ATP = 2 ADP. Its function is as follows. Catalyzes the reversible transfer of the terminal phosphate group between ATP and AMP. Plays an important role in cellular energy homeostasis and in adenine nucleotide metabolism. In Arabidopsis thaliana (Mouse-ear cress), this protein is Probable adenylate kinase 6, chloroplastic.